The primary structure comprises 277 residues: Eukaryotic translation initiation factor 3 subunit J (277 aa).

Positions 1–80 are disordered; that stretch reads MSWDDEDFAV…PAATKNTMLD (80 aa). Over residues 23–43 the composition is skewed to acidic residues; that stretch reads WDDEFAENDDEPVLESWEDEE. The span at 50–75 shows a compositional bias: low complexity; the sequence is KAAAAAAAKAPKKASPSPAATPAATK. A coiled-coil region spans residues 199–230; the sequence is TVENIRQTIATLNVLMKDKEREERQARLAKVK. Residues 257–277 form a disordered region; the sequence is DNDFDLGGNDNFDDFGEDDFM. A compositionally biased stretch (acidic residues) spans 267–277; it reads NFDDFGEDDFM.

The protein belongs to the eIF-3 subunit J family. Component of the eukaryotic translation initiation factor 3 (eIF-3) complex.

Its subcellular location is the cytoplasm. Functionally, component of the eukaryotic translation initiation factor 3 (eIF-3) complex, which is involved in protein synthesis of a specialized repertoire of mRNAs and, together with other initiation factors, stimulates binding of mRNA and methionyl-tRNAi to the 40S ribosome. The eIF-3 complex specifically targets and initiates translation of a subset of mRNAs involved in cell proliferation. This chain is Eukaryotic translation initiation factor 3 subunit J, found in Kluyveromyces lactis (strain ATCC 8585 / CBS 2359 / DSM 70799 / NBRC 1267 / NRRL Y-1140 / WM37) (Yeast).